A 633-amino-acid polypeptide reads, in one-letter code: DNA mismatch repair protein MutL (633 aa).

Disordered stretches follow at residues 337–364 (RPDD…GEFG) and 383–405 (VGWS…TRPE). Over residues 385–396 (WSGGSSASGGSS) the composition is skewed to gly residues.

The protein belongs to the DNA mismatch repair MutL/HexB family.

In terms of biological role, this protein is involved in the repair of mismatches in DNA. It is required for dam-dependent methyl-directed DNA mismatch repair. May act as a 'molecular matchmaker', a protein that promotes the formation of a stable complex between two or more DNA-binding proteins in an ATP-dependent manner without itself being part of a final effector complex. This is DNA mismatch repair protein MutL from Pseudomonas aeruginosa (strain UCBPP-PA14).